Reading from the N-terminus, the 429-residue chain is Ribosomal RNA small subunit methyltransferase B (429 aa).

Residues 254-260 (CAAPGGK), aspartate 277, aspartate 303, and aspartate 322 contribute to the S-adenosyl-L-methionine site. Cysteine 375 functions as the Nucleophile in the catalytic mechanism.

Belongs to the class I-like SAM-binding methyltransferase superfamily. RsmB/NOP family.

It localises to the cytoplasm. The catalysed reaction is cytidine(967) in 16S rRNA + S-adenosyl-L-methionine = 5-methylcytidine(967) in 16S rRNA + S-adenosyl-L-homocysteine + H(+). Specifically methylates the cytosine at position 967 (m5C967) of 16S rRNA. The chain is Ribosomal RNA small subunit methyltransferase B from Shigella flexneri.